The sequence spans 156 residues: Endogenous retrovirus group K member 9 Pro protein (156 aa).

A Peptidase A2 domain is found at F21–L96. D26 is an active-site residue. Positions Y111 to F156 constitute a G-patch domain.

Belongs to the peptidase A2 family. HERV class-II K(HML-2) subfamily. As to quaternary structure, active as a homodimer. Autoproteolytically processed at the N-terminus. Expected C-terminal autoprocessing not detected. The sequence shown is that of the processed Pro protein.

It carries out the reaction Processing at the authentic HIV-1 PR recognition site and release of the mature p17 matrix and the p24 capsid protein, as a result of the cleavage of the -SQNY-|-PIVQ- cleavage site.. Functionally, retroviral proteases have roles in the processing of the primary translation products and the maturation of the viral particle. Endogenous Pro proteins may have kept, lost or modified their original function during evolution. The polypeptide is Endogenous retrovirus group K member 9 Pro protein (ERVK-9) (Homo sapiens (Human)).